Here is a 304-residue protein sequence, read N- to C-terminus: Ribonuclease Z (304 aa).

Residues His63, His65, Asp67, His68, His141, Asp208, and His266 each coordinate Zn(2+). The Proton acceptor role is filled by Asp67.

The protein belongs to the RNase Z family. Homodimer. Requires Zn(2+) as cofactor.

It catalyses the reaction Endonucleolytic cleavage of RNA, removing extra 3' nucleotides from tRNA precursor, generating 3' termini of tRNAs. A 3'-hydroxy group is left at the tRNA terminus and a 5'-phosphoryl group is left at the trailer molecule.. Functionally, zinc phosphodiesterase, which displays some tRNA 3'-processing endonuclease activity. Probably involved in tRNA maturation, by removing a 3'-trailer from precursor tRNA. This is Ribonuclease Z from Chlamydia trachomatis serovar D (strain ATCC VR-885 / DSM 19411 / UW-3/Cx).